A 62-amino-acid chain; its full sequence is Protein P14 (62 aa).

Needed for optimal phage development. The sequence is that of Protein P14 (P14) from Pseudomonas savastanoi pv. phaseolicola (Pseudomonas syringae pv. phaseolicola).